We begin with the raw amino-acid sequence, 65 residues long: Large ribosomal subunit protein bL35 (65 aa).

Belongs to the bacterial ribosomal protein bL35 family.

The protein is Large ribosomal subunit protein bL35 of Enterobacter sp. (strain 638).